The chain runs to 177 residues: MTDRILIARIGAPHGVKGEVRLFAFGEDPLALKRYPLTDESGARRFKVQSLRAAKDHFVARLEGIADRNAAEALTNTDLFVPRDALPAAEDEDTFYHADLMGLRVEDQSGALLGTVLAMHDFGAGDVLEYTPEGGGRTLLLPFTKAAVPVVDVPGGRIVVVPDTNPDETPPEDADQA.

Residues 92–166 (EDTFYHADLM…RIVVVPDTNP (75 aa)) form the PRC barrel domain.

Belongs to the RimM family. In terms of assembly, binds ribosomal protein uS19.

The protein resides in the cytoplasm. Functionally, an accessory protein needed during the final step in the assembly of 30S ribosomal subunit, possibly for assembly of the head region. Essential for efficient processing of 16S rRNA. May be needed both before and after RbfA during the maturation of 16S rRNA. It has affinity for free ribosomal 30S subunits but not for 70S ribosomes. This Azorhizobium caulinodans (strain ATCC 43989 / DSM 5975 / JCM 20966 / LMG 6465 / NBRC 14845 / NCIMB 13405 / ORS 571) protein is Ribosome maturation factor RimM.